Consider the following 77-residue polypeptide: Sec-independent protein translocase protein TatA (77 aa).

A helical membrane pass occupies residues Met1 to Gly21. The disordered stretch occupies residues Ala50 to Ser77. Polar residues predominate over residues Ser53 to Gln62. The segment covering Gly66–Ser77 has biased composition (basic and acidic residues).

It belongs to the TatA/E family. The Tat system comprises two distinct complexes: a TatABC complex, containing multiple copies of TatA, TatB and TatC subunits, and a separate TatA complex, containing only TatA subunits. Substrates initially bind to the TatABC complex, which probably triggers association of the separate TatA complex to form the active translocon.

The protein resides in the cell inner membrane. Its function is as follows. Part of the twin-arginine translocation (Tat) system that transports large folded proteins containing a characteristic twin-arginine motif in their signal peptide across membranes. TatA could form the protein-conducting channel of the Tat system. In Azoarcus sp. (strain BH72), this protein is Sec-independent protein translocase protein TatA.